The sequence spans 278 residues: Elongation factor Ts (278 aa).

The segment at 79–82 (TDFV) is involved in Mg(2+) ion dislocation from EF-Tu.

This sequence belongs to the EF-Ts family.

It localises to the cytoplasm. Associates with the EF-Tu.GDP complex and induces the exchange of GDP to GTP. It remains bound to the aminoacyl-tRNA.EF-Tu.GTP complex up to the GTP hydrolysis stage on the ribosome. This Borrelia hermsii (strain HS1 / DAH) protein is Elongation factor Ts.